Reading from the N-terminus, the 405-residue chain is S-adenosylmethionine synthase (405 aa).

ATP is bound at residue 139-144 (GKGSAD).

It belongs to the AdoMet synthase 2 family. Requires Mg(2+) as cofactor.

The enzyme catalyses L-methionine + ATP + H2O = S-adenosyl-L-methionine + phosphate + diphosphate. Its pathway is amino-acid biosynthesis; S-adenosyl-L-methionine biosynthesis; S-adenosyl-L-methionine from L-methionine: step 1/1. Functionally, catalyzes the formation of S-adenosylmethionine from methionine and ATP. This Sulfurisphaera tokodaii (strain DSM 16993 / JCM 10545 / NBRC 100140 / 7) (Sulfolobus tokodaii) protein is S-adenosylmethionine synthase.